Consider the following 385-residue polypeptide: 1-deoxy-D-xylulose 5-phosphate reductoisomerase (385 aa).

8 residues coordinate NADPH: Thr11, Gly12, Ser13, Ile14, Ala37, Arg38, Asn39, and Asn123. Position 124 (Lys124) interacts with 1-deoxy-D-xylulose 5-phosphate. An NADPH-binding site is contributed by Glu125. Asp149 provides a ligand contact to Mn(2+). Positions 150, 151, 173, and 196 each coordinate 1-deoxy-D-xylulose 5-phosphate. Glu151 is a Mn(2+) binding site. NADPH is bound at residue Gly202. 1-deoxy-D-xylulose 5-phosphate-binding residues include Ser209, Asn214, Lys215, and Glu218. A Mn(2+)-binding site is contributed by Glu218.

It belongs to the DXR family. The cofactor is Mg(2+). Mn(2+) is required as a cofactor.

The catalysed reaction is 2-C-methyl-D-erythritol 4-phosphate + NADP(+) = 1-deoxy-D-xylulose 5-phosphate + NADPH + H(+). Its pathway is isoprenoid biosynthesis; isopentenyl diphosphate biosynthesis via DXP pathway; isopentenyl diphosphate from 1-deoxy-D-xylulose 5-phosphate: step 1/6. Catalyzes the NADPH-dependent rearrangement and reduction of 1-deoxy-D-xylulose-5-phosphate (DXP) to 2-C-methyl-D-erythritol 4-phosphate (MEP). In Moorella thermoacetica (strain ATCC 39073 / JCM 9320), this protein is 1-deoxy-D-xylulose 5-phosphate reductoisomerase.